A 2151-amino-acid polypeptide reads, in one-letter code: MEKYREIHRDLKEFTINSLTAVECMDYLDRLYAVRHDIVDQMIKHEWSDNKDSEEPISKVLLFAGIPNNVITALEKKVIPDHPSGKTLRSFFKMTPDNYRITGSLIEFVEVTVTADVDKGIREKKMKYELGLKYLEQELMTFFHRGELQNPYKITFKVVAVRTDGSNISTQWPSARNDGVVQYMRLVQAEISYVREHLVKTEERAALEAMFNLKFNISSLKTQPYFIPEYKGIDLIRPDIDGLVNYAQSWMSKTQEFSFFEVKGSAVFDCFNENEQGHIVKYPMSRHPRNFLLIQCTVLTAYKPATILSDQLDSRRACIQFLNLIPETPASILAHDMAHRYINLTRDDLLAYYAPRIQFNPTQNIKEPGTFKLTSNMMRPESKIMLDMLSQHEPRENLGKSIESLNISSHIVQSDCVSLITKILSDLELNISEPSSHEQITAKHTHVDTVLDKFFQNETQKYLIDILKKTTAWHIGHLVRDITESLIAHSGLRRSKYWSIHAYNNGSVILFILPSKSLEVAGSFVRFMTAFKLGPGLVDKDNLDSILADGDILWGVSKIMSLDLNRLLALNIAFEKALLATATWFQYYTEDQSQFPLQHSIRSVFAYHFLLAICQKMKLCAIFDNLRYLIPAVTSLYSGFPSLVEKLFERPFKSALEVYVYYNIKSLLVALAQNNKARFYSKVKLLGLTVDQSTVGASGIYPSFMSRVVYKHYKSLISEVTTCFFLFEKGLHGNVNEEAKIHLETVEWATKFKEKEDKYGEMLVEHGYTIGELVESSELAVQQLYCQDAVELAANELNRVLIAKSQVVANSILNKYWEEPYFSQTRNISLKGMSGQVQEDGHLSSSTTIIEAIRYLSNSRNNPNVLQLYEETRHQKAQARIVRKFQRTEADRGFFITTLPTRCRLEIIEDYYDAISKNVAEEYISYGGERKILCIQAALEKALRWASGESFIELSNGKFIRMKRKLMYVSADATKWSPGDNSAKFRRFTAALHNGLPDDRLKNCVIDALRHVYKTDFYMSRKLRHYIDSMDTYEPHVRDFLNFFPDGHHGEVRGNWLQGNLNKCSSLFGVAMSLLFKEIWTRLFPELDCFFEFAHHSDDALFIYGYLEPADDGTDWFLFVSQQIQAGKLHWFNVNTEMWKSMFNLHEHILLLGSIKISPKKTTLSPTNAEFLSTFFEGCAVSIPFIKILLGSLSDLPGLGYFDDLAAAQTRCVKAMDLGASPQISQLAVSLSTSKVERLYGTSIGMVNYPGTYLRTKHSETPIPLGGSGAMSIMELSTAGIGMSDKNLLKQALIGYMHKHQKQMSYILGLFKFLMDLSGETFQHERLGQFSFIGKVQWKIFTPKSEFEFSDMYSQKFLKVWSEQHPTYDYIIPKGRDNLLIYLVRKLNDPSIITAMTMQSPLQLRFRMQAKQHMKVCRLDGDWVTFREVLAAANSFAESYEPSQNDIDLFQTLTSCTFSKEYAWKDFLNNVHCDVIPTKQVQRAKVARTFTVREKDRIIQNSIPAVIGYKFAVTVDEMSDVLDTAKFPDSLAVDLKTMKDGVYRELGLDISSPDVMKKVAPMLYKSAKSRVVIVQGNVEGTAEAICAYWLRNMSLIKTIKVKPHKEVLQAVSIFNRKEDIGQQKDLSALKLCIEVWRWAKANNAPYRDWFHALWFEDKTFSEWLDRFIRVGVPPIDPEIQCAALMIADVKGDRSVLQLQANRRAYSGKQYDAYCVQTYNEETKLYEGDLRVTFNFGLDCARLEIFWDKKTYILETSITQKHVLKIMMEEVSKELVRCGMRFNTEQVNGVKHLVLFKTDSGFEWGKPNIPCIVYKNCALRTGLRTNQAINHKFMITIKDDGLRAIAQYDEDSPRFLLAHAFHTIRDVRYQAVDAVSNVWFTHKGIKLYLNPIISSGLLEYFMKNIPAAIPPAAYSLIMNRAKISVDLFMFNDLLRLINPGNTLDLSGLEITGEGYSTVNSLSSRLWSEEMSLVDDEEEMDDEFTIDLQDVDFENIDIEADVEHFLQDESAYTGDLLIMSEETEVKKMRGIIKLLEPVKLIKSWVSRGLSIEKVYNPVNIILMTRYISKNFNFSGKQVSLLDPYDLTELESIVKGWGESVVDQFDSLDLEAQNLVQKQGIVPEDVIPDSLFSFRHTMVLLRRLFGQDSVSTFY.

Mn(2+) is bound by residues His36, Glu54, Asp97, Glu110, and Val111. Residue Lys124 is the For endonuclease activity of the active site. In terms of domain architecture, RdRp catalytic spans 956–1142 (NGKFIRMKRK…NVNTEMWKSM (187 aa)). Residue Asp1099 coordinates Mg(2+).

Belongs to the Bunyavirales RNA polymerase family. As to quaternary structure, interacts with the viral nucleoprotein. Requires Mn(2+) as cofactor. The cofactor is Mg(2+).

It localises to the host cytoplasm. Its subcellular location is the host perinuclear region. The catalysed reaction is RNA(n) + a ribonucleoside 5'-triphosphate = RNA(n+1) + diphosphate. RNA-dependent RNA polymerase, which is responsible for the replication and transcription of the viral RNA genome using antigenomic RNA as an intermediate. During transcription, synthesizes subgenomic RNAs and assures their capping by a cap-snatching mechanism, which involves the endonuclease activity cleaving the host capped pre-mRNAs. These short capped RNAs are then used as primers for viral transcription. Cleaves ssRNA substrates but not DNA. Seems to downregulate the expression of its own and heterologous mRNAs through its endonuclease activity. This is RNA-directed RNA polymerase L (L) from Homo sapiens (Human).